The primary structure comprises 258 residues: Synaptosomal-associated protein 29 (258 aa).

Positions 1–41 (MSAYPKSYNPFDDDGEDEGARPAPWRDARDLPDGPDAPADR) are disordered. Positions 18 to 32 (EGARPAPWRDARDLP) are enriched in basic and acidic residues. Positions 76–107 (ASSEELARQRGVLERTEKMVDKMDQDLKISQK) form a coiled coil. Ser-77, Ser-78, and Ser-114 each carry phosphoserine. A phosphothreonine mark is found at Thr-130 and Thr-137. The segment at 150–191 (ISTSKEQEAKYQASHPNLRKLDDTDPVPRGAGSAMSTDAYPK) is disordered. Phosphoserine is present on residues Ser-163, Ser-182, Ser-185, Ser-204, and Ser-210. One can recognise a t-SNARE coiled-coil homology domain in the interval 196–258 (RAYHQKIDSN…KSTERKVRQL (63 aa)).

The protein belongs to the SNAP-25 family. In terms of assembly, forms a SNARE complex, composed of VAMP8, SNAP29 and STX17, involved in fusion of autophagosome with lysosome. Interacts with multiple syntaxins including STX6. Interacts with EIPR1. Interacts with STX17; this interaction is increased in the absence of TMEM39A. As to quaternary structure, (Microbial infection) Interacts with Hantaan hantavirus nucleoprotein; this interaction prevents the breakdown of the viral glycoprotein N by virus-triggered autophagy. (Microbial infection) The interaction with STX17 is decreased in presence of SARS coronavirus-2/SARS-CoV-2 ORF3A protein. In terms of tissue distribution, found in brain, heart, kidney, liver, lung, placenta, skeletal muscle, spleen and pancreas.

Its subcellular location is the cytoplasm. The protein resides in the golgi apparatus membrane. It is found in the cytoplasmic vesicle. The protein localises to the autophagosome membrane. It localises to the cell projection. Its subcellular location is the cilium membrane. SNAREs, soluble N-ethylmaleimide-sensitive factor-attachment protein receptors, are essential proteins for fusion of cellular membranes. SNAREs localized on opposing membranes assemble to form a trans-SNARE complex, an extended, parallel four alpha-helical bundle that drives membrane fusion. SNAP29 is a SNARE involved in autophagy through the direct control of autophagosome membrane fusion with the lysososome membrane. Also plays a role in ciliogenesis by regulating membrane fusions. This is Synaptosomal-associated protein 29 from Homo sapiens (Human).